A 452-amino-acid chain; its full sequence is Agmatine coumaroyltransferase (452 aa).

Catalysis depends on proton acceptor residues His163 and Asp396.

The protein belongs to the plant acyltransferase family.

The catalysed reaction is 4-coumaroyl-CoA + agmatine = N-(4-guanidinobutyl)-4-hydroxycinnamamide + CoA + H(+). Involved in the biosynthesis of hydroxycinnamic acid amides, which play a role in defense against pathogens. Agmatine is the preferred acyl acceptor, lower activity is observed towards putrescine. The preferred acyl donor is p-coumaroyl-CoA, lower activity is seen towards feruloyl-CoA. The sequence is that of Agmatine coumaroyltransferase from Arabidopsis thaliana (Mouse-ear cress).